A 577-amino-acid polypeptide reads, in one-letter code: CDPK-related kinase 7 (577 aa).

The tract at residues 1-38 (MGLCHGKPIEQQSKNLPISNEIEETPKNSSQKAKSSGF) is disordered. Residue G2 is the site of N-myristoyl glycine attachment. A Protein kinase domain is found at 124–386 (YEIDGEVGRG…AAQALCHPWL (263 aa)). ATP is bound by residues 130–138 (VGRGHFGYT) and K156. The Proton acceptor role is filled by D252. S292 carries the post-translational modification Phosphoserine. S334 is modified (phosphoserine; by CPK1, CPK10 and CPK34). The segment at 391–421 (ELKIPSDMIIYKLVKVYIMSSSLRKSALAAL) is autoinhibitory domain. Positions 410-430 (SSSLRKSALAALAKTLTVPQL) are calmodulin binding (CaMBD). EF-hand domains are found at residues 428–464 (PQLTYLQEQFNLLGPSKNGYISMQNYKTAILKSSTEA), 465–500 (TKDSRVLDFVHMISCLQYKKLDFEEFCASALSVYQL), 501–540 (EAMETWEQHARRAYELYEKDGNRVIMIEELATELGLGPSV), and 543–572 (HVVLQDWIRHSDGKLSFLGFVRLLHGVSSR). Positions 443, 445, 447, 484, 489, 520, 522, 529, 554, and 556 each coordinate Ca(2+). Residue S558 is modified to Phosphoserine.

Belongs to the protein kinase superfamily. Ser/Thr protein kinase family. CDPK subfamily. As to quaternary structure, binds calmodulin (CaM) in a calcium-dependent manner. Post-translationally, autophosphorylated.

The protein resides in the membrane. The catalysed reaction is L-seryl-[protein] + ATP = O-phospho-L-seryl-[protein] + ADP + H(+). It catalyses the reaction L-threonyl-[protein] + ATP = O-phospho-L-threonyl-[protein] + ADP + H(+). Activated by calcium and calmodulin. Autophosphorylation may play an important role in the regulation of the kinase activity. May play a role in signal transduction pathways that involve calcium as a second messenger. The protein is CDPK-related kinase 7 (CRK7) of Arabidopsis thaliana (Mouse-ear cress).